The primary structure comprises 856 residues: DNA mismatch repair protein MutS (856 aa).

ATP is bound at residue 607-614; the sequence is GPNMSGKS.

Belongs to the DNA mismatch repair MutS family.

This protein is involved in the repair of mismatches in DNA. It is possible that it carries out the mismatch recognition step. This protein has a weak ATPase activity. This Lactobacillus delbrueckii subsp. bulgaricus (strain ATCC 11842 / DSM 20081 / BCRC 10696 / JCM 1002 / NBRC 13953 / NCIMB 11778 / NCTC 12712 / WDCM 00102 / Lb 14) protein is DNA mismatch repair protein MutS.